Here is a 193-residue protein sequence, read N- to C-terminus: uncharacterized protein (193 aa).

Disordered stretches follow at residues 1–21 (MPKG…APPL), 53–96 (GAPA…PWPS), and 114–136 (SGPE…ASAS). Residues 53 to 70 (GAPAGGAPAAGGRSLPQG) show a composition bias toward low complexity. Residues 71–95 (PSAPAPPPPPGLGPPSERPCPPPWP) are compositionally biased toward pro residues. Over residues 116–127 (PEAAASPLAPGP) the composition is skewed to low complexity.

This is an uncharacterized protein from Bos taurus (Bovine).